A 655-amino-acid polypeptide reads, in one-letter code: Forkhead box protein O1 (655 aa).

2 disordered regions span residues 1–63 and 116–158; these read MAEA…SASA and GCLH…SRRN. Thr-24 is modified (phosphothreonine; by PKB/AKT1 or PKB/AKT2 and SGK1). A compositionally biased stretch (low complexity) spans 33 to 63; that stretch reads SQSNSATSSPAPSGSAAANPDAAAGLPSASA. Residues 120-141 are compositionally biased toward pro residues; it reads PAPPQPPPPGPLSQHPPVPPAA. The fork-head DNA-binding region spans 159–235; it reads AWGNLSYADL…VQNEGTGKSS (77 aa). 2 DNA-binding regions span residues 211–218 and 234–237; these read NSIRHNLS and SSWW. 4 positions are modified to phosphoserine; by STK4/MST1: Ser-212, Ser-218, Ser-234, and Ser-235. Residues 234-344 are disordered; it reads SSWWMLNPEG…QDDLGEGDVH (111 aa). N6-acetyllysine occurs at positions 245 and 248. Ser-249 carries the phosphoserine; by CDK1 modification. Residues Arg-251 and Arg-253 each carry the omega-N-methylarginine; by PRMT1 modification. The Nuclear localization signal signature appears at 251–253; sequence RRR. Residue Ser-256 is modified to Phosphoserine; by PKB/AKT1 and SGK1. 3 positions are modified to N6-acetyllysine: Lys-262, Lys-265, and Lys-274. Residues 264-275 are compositionally biased toward basic residues; that stretch reads AKSRSRAAKKKA. Positions 283–563 are sufficient for interaction with NLK; it reads GAGDSPGSQF…RLTQVKTPVQ (281 aa). Phosphoserine occurs at positions 287 and 298. The segment covering 309–326 has biased composition (polar residues); the sequence is NWSTFRPRTSSNASTISG. The residue at position 319 (Ser-319) is a Phosphoserine; by PKB/AKT1. Ser-322 carries the phosphoserine; by CK1 and SGK1 modification. Ser-325 carries the post-translational modification Phosphoserine; by CK1. Ser-329 bears the Phosphoserine; by DYRK1A mark. Thr-333 bears the Phosphothreonine mark. Residues 363–459 form a required for interaction with RUNX2 region; it reads SEISNPENME…GGMSQYNCAP (97 aa). Lys-423 carries the N6-acetyllysine modification. The Required for interaction with SIRT1 motif lies at 462-466; it reads LKELL. Over residues 507–534 the composition is skewed to polar residues; that stretch reads YGSQASHNKMMNPSSHTHPGHAQQTSAV. The interval 507–537 is disordered; sequence YGSQASHNKMMNPSSHTHPGHAQQTSAVNGR.

In terms of assembly, interacts with LRPPRC. Interacts with RUNX2; the interaction inhibits RUNX2 transcriptional activity and mediates the IGF1/insulin-dependent BGLAP expression in osteoblasts Interacts with PPP2R1A; the interaction regulates the dephosphorylation of FOXO1 at Thr-24 and Ser-256 leading to its nuclear import. Interacts (acetylated form) with PPARG. Interacts with XBP1 isoform 2; this interaction is direct and leads to FOXO1 ubiquitination and degradation via the proteasome pathway. Interacts with NLK. Interacts with SIRT1; the interaction results in the deacetylation of FOXO1 leading to activation of FOXO1-mediated transcription of genes involved in DNA repair and stress resistance. Binds to CDK1. Interacts with the 14-3-3 proteins, YWHAG and YWHAZ; the interactions require insulin-stimulated phosphorylation on Thr-24, promote nuclear exit and loss of transcriptional activity. Interacts with SKP2; the interaction ubiquitinates FOXO1 leading to its proteasomal degradation. The interaction requires the presence of KRIT1. Interacts (via the C-terminal half) with ATF4 (via its DNA-binding domain); the interaction occurs in osteoblasts, regulates glucose homeostasis via suppression of beta-cell proliferation and subsequent decrease in insulin production. Interacts with PRMT1; the interaction methylates FOXO1, prevents PKB/AKT1 phosphorylation and retains FOXO1 in the nucleus. Interacts with EP300 and CREBBP; the interactions acetylate FOXO1. Interacts with SIRT2; the interaction is disrupted in response to oxidative stress or serum deprivation, leading to increased level of acetylated FOXO1, which promotes stress-induced autophagy by stimulating E1-like activating enzyme ATG7. Interacts (acetylated form) with ATG7; the interaction is increased in response to oxidative stress or serum deprivation and promotes the autophagic process leading to cell death. Interacts (via the Fork-head domain) with CEBPA; the interaction increases when FOXO1 is deacetylated. Interacts with WDFY2. Forms a complex with WDFY2 and AKT1. Interacts with CRY1. Interacts with PPIA/CYPA; the interaction promotes FOXO1 dephosphorylation, nuclear accumulation and transcriptional activity. Interacts with TOX4; FOXO1 is required for full induction of TOX4-dependent activity and the interaction is inhibited by insulin. Interacts (when phosphorylated on Ser-256) with STUB1/CHIP. In terms of processing, phosphorylation by NLK promotes nuclear export and inhibits the transcriptional activity. In response to growth factors, phosphorylation on Thr-24, Ser-256 and Ser-322 by PKB/AKT1 promotes nuclear export and inactivation of transactivational activity. Phosphorylation on Thr-24 is required for binding 14-3-3 proteins. Phosphorylation of Ser-256 decreases DNA-binding activity and promotes the phosphorylation of Thr-24 and Ser-319, permitting phosphorylation of Ser-322 and Ser-325, probably by CDK1, leading to nuclear exclusion and loss of function. Stress signals, such as response to oxygen or nitric oxide, attenuate the PKB/AKT1-mediated phosphorylation leading to nuclear retention. Phosphorylation of Ser-329 is independent of IGF1 and leads to reduced function. Dephosphorylated on Thr-24 and Ser-256 by PP2A in beta-cells under oxidative stress leading to nuclear retention. Phosphorylation of Ser-249 by CDK1 disrupts binding of 14-3-3 proteins leading to nuclear accumulation and has no effect on DNA-binding nor transcriptional activity. Phosphorylation by STK4/MST1 on Ser-212, upon oxidative stress, inhibits binding to 14-3-3 proteins and nuclear export. PPIA/CYPA promotes its dephosphorylation on Ser-256. Ubiquitinated by SKP2. Ubiquitination leads to proteasomal degradation. Ubiquitinated by STUB1/CHIP; when Ser-256 is phosphorylated. Post-translationally, methylation inhibits AKT1-mediated phosphorylation at Ser-256 and is increased by oxidative stress. In terms of processing, acetylated. Acetylation at Lys-262, Lys-265 and Lys-274 are necessary for autophagic cell death induction. Deacetylated by SIRT2 in response to oxidative stress or serum deprivation, thereby negatively regulating FOXO1-mediated autophagic cell death. Once in the nucleus, acetylated by CREBBP/EP300. Acetylation diminishes the interaction with target DNA and attenuates the transcriptional activity. It increases the phosphorylation at Ser-256. Deacetylation by SIRT1 results in reactivation of the transcriptional activity. Oxidative stress by hydrogen peroxide treatment appears to promote deacetylation and uncoupling of insulin-induced phosphorylation. By contrast, resveratrol acts independently of acetylation. Acetylated at Lys-423, promoting its localization to the nucleus and transcription factor activity. Deacetylation at Lys-423 by SIRT6, promotes its translocation into the cytoplasm, preventing its transcription factor activity. Deacetylation and subsequent inhibition by SIRT6 has different effects depending on cell types: it inhibits gluconeogenesis in hepatocytes, promotes glucose sensing in pancreatic beta-cells and regulates lipid catabolism in brown adipocytes. Expressed in umbilical endothelial cells (at protein level). Abundantly expressed in skeletal muscle and ovary, with lower expression in the heart, placenta, lung, liver, pancreas, spleen, testis and small intestine. Weakly expressed in the brain, thymus, prostate and mucosal lining of the colon.

Its subcellular location is the cytoplasm. The protein localises to the nucleus. Functionally, transcription factor that is the main target of insulin signaling and regulates metabolic homeostasis in response to oxidative stress. Binds to the insulin response element (IRE) with consensus sequence 5'-TT[G/A]TTTTG-3' and the related Daf-16 family binding element (DBE) with consensus sequence 5'-TT[G/A]TTTAC-3'. Activity suppressed by insulin. Main regulator of redox balance and osteoblast numbers and controls bone mass. Orchestrates the endocrine function of the skeleton in regulating glucose metabolism. Also acts as a key regulator of chondrogenic commitment of skeletal progenitor cells in response to lipid availability: when lipids levels are low, translocates to the nucleus and promotes expression of SOX9, which induces chondrogenic commitment and suppresses fatty acid oxidation. Acts synergistically with ATF4 to suppress osteocalcin/BGLAP activity, increasing glucose levels and triggering glucose intolerance and insulin insensitivity. Also suppresses the transcriptional activity of RUNX2, an upstream activator of osteocalcin/BGLAP. Acts as an inhibitor of glucose sensing in pancreatic beta cells by acting as a transcription repressor and suppressing expression of PDX1. In hepatocytes, promotes gluconeogenesis by acting together with PPARGC1A and CEBPA to activate the expression of genes such as IGFBP1, G6PC1 and PCK1. Also promotes gluconeogenesis by directly promoting expression of PPARGC1A and G6PC1. Important regulator of cell death acting downstream of CDK1, PKB/AKT1 and STK4/MST1. Promotes neural cell death. Mediates insulin action on adipose tissue. Regulates the expression of adipogenic genes such as PPARG during preadipocyte differentiation and, adipocyte size and adipose tissue-specific gene expression in response to excessive calorie intake. Regulates the transcriptional activity of GADD45A and repair of nitric oxide-damaged DNA in beta-cells. Required for the autophagic cell death induction in response to starvation or oxidative stress in a transcription-independent manner. Mediates the function of MLIP in cardiomyocytes hypertrophy and cardiac remodeling. Positive regulator of apoptosis in cardiac smooth muscle cells as a result of its transcriptional activation of pro-apoptotic genes. Regulates endothelial cell (EC) viability and apoptosis in a PPIA/CYPA-dependent manner via transcription of CCL2 and BCL2L11 which are involved in EC chemotaxis and apoptosis. In Homo sapiens (Human), this protein is Forkhead box protein O1.